Consider the following 368-residue polypeptide: 4-hydroxy-3-methylbut-2-en-1-yl diphosphate synthase (flavodoxin) (368 aa).

Residues Cys-268, Cys-271, Cys-303, and Glu-310 each contribute to the [4Fe-4S] cluster site.

Belongs to the IspG family. It depends on [4Fe-4S] cluster as a cofactor.

It carries out the reaction (2E)-4-hydroxy-3-methylbut-2-enyl diphosphate + oxidized [flavodoxin] + H2O + 2 H(+) = 2-C-methyl-D-erythritol 2,4-cyclic diphosphate + reduced [flavodoxin]. It functions in the pathway isoprenoid biosynthesis; isopentenyl diphosphate biosynthesis via DXP pathway; isopentenyl diphosphate from 1-deoxy-D-xylulose 5-phosphate: step 5/6. Functionally, converts 2C-methyl-D-erythritol 2,4-cyclodiphosphate (ME-2,4cPP) into 1-hydroxy-2-methyl-2-(E)-butenyl 4-diphosphate. The protein is 4-hydroxy-3-methylbut-2-en-1-yl diphosphate synthase (flavodoxin) of Listeria monocytogenes serovar 1/2a (strain ATCC BAA-679 / EGD-e).